The following is an 874-amino-acid chain: Alanine--tRNA ligase (874 aa).

Residues His562, His566, Cys665, and His669 each contribute to the Zn(2+) site.

This sequence belongs to the class-II aminoacyl-tRNA synthetase family. Requires Zn(2+) as cofactor.

It localises to the cytoplasm. The enzyme catalyses tRNA(Ala) + L-alanine + ATP = L-alanyl-tRNA(Ala) + AMP + diphosphate. Catalyzes the attachment of alanine to tRNA(Ala) in a two-step reaction: alanine is first activated by ATP to form Ala-AMP and then transferred to the acceptor end of tRNA(Ala). Also edits incorrectly charged Ser-tRNA(Ala) and Gly-tRNA(Ala) via its editing domain. The polypeptide is Alanine--tRNA ligase (Pseudomonas putida (strain W619)).